We begin with the raw amino-acid sequence, 132 residues long: Fatty acid-binding protein type 3 (132 aa).

It belongs to the calycin superfamily. Fatty-acid binding protein (FABP) family.

The protein is Fatty acid-binding protein type 3 of Fasciola hepatica (Liver fluke).